A 201-amino-acid polypeptide reads, in one-letter code: RILP-like protein 2 (201 aa).

The region spanning 14-108 (SPEMALDKDP…LRDGPQMGVG (95 aa)) is the RH1 domain. The stretch at 67–155 (LEMLEALVNQ…AQDELQCYKS (89 aa)) forms a coiled coil. Residues 121–197 (RPRFTLQELR…TVKSLFSFKQ (77 aa)) enclose the RH2 domain. Residues 175–201 (TSSPRSNASKEKSTVKSLFSFKQGKNT) form a disordered region.

The protein belongs to the RILPL family.

It localises to the cytoplasm. Its subcellular location is the cytosol. The protein localises to the cytoskeleton. The protein resides in the microtubule organizing center. It is found in the centrosome. It localises to the cell projection. Its subcellular location is the cilium. In terms of biological role, involved in cell shape and neuronal morphogenesis, positively regulating the establishment and maintenance of dendritic spines. Plays a role in cellular protein transport. The protein is RILP-like protein 2 (rilpl2) of Xenopus laevis (African clawed frog).